A 462-amino-acid chain; its full sequence is Fumarate hydratase class II (462 aa).

Substrate is bound by residues 98 to 100 (SGT), arginine 126, 129 to 132 (HPND), 139 to 141 (SSN), and threonine 187. The disordered stretch occupies residues 120–141 (GTRGKGRKVHPNDHVNKGQSSN). The active-site Proton donor/acceptor is histidine 188. Residue serine 318 is part of the active site. Residues serine 319 and 324 to 326 (KVN) each bind substrate.

Belongs to the class-II fumarase/aspartase family. Fumarase subfamily. As to quaternary structure, homotetramer.

It localises to the cytoplasm. The catalysed reaction is (S)-malate = fumarate + H2O. It participates in carbohydrate metabolism; tricarboxylic acid cycle; (S)-malate from fumarate: step 1/1. Its function is as follows. Involved in the TCA cycle. Catalyzes the stereospecific interconversion of fumarate to L-malate. The protein is Fumarate hydratase class II of Nitrosomonas europaea (strain ATCC 19718 / CIP 103999 / KCTC 2705 / NBRC 14298).